A 287-amino-acid polypeptide reads, in one-letter code: Ciliary microtubule inner protein 6 (287 aa).

2 stretches are compositionally biased toward basic and acidic residues: residues 1 to 15 (MEEK…KIED) and 25 to 34 (EEIKHEEKPG). Residues 1-42 (MEEKEDKHQQHKIEDAAITYVSENEEIKHEEKPGKSIHHSKS) are disordered. Positions 128 to 160 (GIVPLASPGTSAELQNNFIEYISFIHQYDARKT) are mn 1. The interval 179–287 (KPGSRPTVPK…PLNPPIKKSE (109 aa)) is disordered. Composition is skewed to basic and acidic residues over residues 203-212 (EQSKKTEKGN) and 232-245 (LEPK…DVRQ). The tract at residues 213–246 (SAESRMISPGLCQQNSQELLEPKTHLSETDVRQA) is mn 2.

It is found in the cell projection. The protein localises to the cilium. In Homo sapiens (Human), this protein is Ciliary microtubule inner protein 6.